We begin with the raw amino-acid sequence, 338 residues long: Ketol-acid reductoisomerase (NADP(+)) (338 aa).

The region spanning 1 to 181 (MKVFYDKDAD…GGGRAGIIET (181 aa)) is the KARI N-terminal Rossmann domain. NADP(+)-binding positions include 24 to 27 (YGSQ), Arg-47, and Ser-52. The active site involves His-107. Residue Gly-133 participates in NADP(+) binding. Residues 182-327 (NFREETETDL…SKLRAMMPWI (146 aa)) enclose the KARI C-terminal knotted domain. Mg(2+) is bound by residues Asp-190, Glu-194, Glu-226, and Glu-230. Ser-251 contacts substrate.

The protein belongs to the ketol-acid reductoisomerase family. Mg(2+) is required as a cofactor.

It carries out the reaction (2R)-2,3-dihydroxy-3-methylbutanoate + NADP(+) = (2S)-2-acetolactate + NADPH + H(+). It catalyses the reaction (2R,3R)-2,3-dihydroxy-3-methylpentanoate + NADP(+) = (S)-2-ethyl-2-hydroxy-3-oxobutanoate + NADPH + H(+). The protein operates within amino-acid biosynthesis; L-isoleucine biosynthesis; L-isoleucine from 2-oxobutanoate: step 2/4. Its pathway is amino-acid biosynthesis; L-valine biosynthesis; L-valine from pyruvate: step 2/4. Its function is as follows. Involved in the biosynthesis of branched-chain amino acids (BCAA). Catalyzes an alkyl-migration followed by a ketol-acid reduction of (S)-2-acetolactate (S2AL) to yield (R)-2,3-dihydroxy-isovalerate. In the isomerase reaction, S2AL is rearranged via a Mg-dependent methyl migration to produce 3-hydroxy-3-methyl-2-ketobutyrate (HMKB). In the reductase reaction, this 2-ketoacid undergoes a metal-dependent reduction by NADPH to yield (R)-2,3-dihydroxy-isovalerate. This Burkholderia thailandensis (strain ATCC 700388 / DSM 13276 / CCUG 48851 / CIP 106301 / E264) protein is Ketol-acid reductoisomerase (NADP(+)).